The following is a 338-amino-acid chain: Ketol-acid reductoisomerase (NADP(+)) (338 aa).

The region spanning 1–181 (MKVFYDKDAD…GGGRAGIIET (181 aa)) is the KARI N-terminal Rossmann domain. NADP(+)-binding positions include 24-27 (YGSQ), arginine 47, and serine 52. Histidine 107 is an active-site residue. Position 133 (glycine 133) interacts with NADP(+). The region spanning 182-327 (NFREETETDL…AKLRAMMPWI (146 aa)) is the KARI C-terminal knotted domain. 4 residues coordinate Mg(2+): aspartate 190, glutamate 194, glutamate 226, and glutamate 230. Serine 251 provides a ligand contact to substrate.

It belongs to the ketol-acid reductoisomerase family. Mg(2+) serves as cofactor.

It catalyses the reaction (2R)-2,3-dihydroxy-3-methylbutanoate + NADP(+) = (2S)-2-acetolactate + NADPH + H(+). The enzyme catalyses (2R,3R)-2,3-dihydroxy-3-methylpentanoate + NADP(+) = (S)-2-ethyl-2-hydroxy-3-oxobutanoate + NADPH + H(+). It functions in the pathway amino-acid biosynthesis; L-isoleucine biosynthesis; L-isoleucine from 2-oxobutanoate: step 2/4. It participates in amino-acid biosynthesis; L-valine biosynthesis; L-valine from pyruvate: step 2/4. Involved in the biosynthesis of branched-chain amino acids (BCAA). Catalyzes an alkyl-migration followed by a ketol-acid reduction of (S)-2-acetolactate (S2AL) to yield (R)-2,3-dihydroxy-isovalerate. In the isomerase reaction, S2AL is rearranged via a Mg-dependent methyl migration to produce 3-hydroxy-3-methyl-2-ketobutyrate (HMKB). In the reductase reaction, this 2-ketoacid undergoes a metal-dependent reduction by NADPH to yield (R)-2,3-dihydroxy-isovalerate. The sequence is that of Ketol-acid reductoisomerase (NADP(+)) from Ralstonia nicotianae (strain ATCC BAA-1114 / GMI1000) (Ralstonia solanacearum).